The chain runs to 119 residues: MAKHVTTREKRRARIRRKISGTELRPRLTIYKSLKHMYAQLVDDVAGKTLVSVATTSKSLKGELGDEDKTAAAKKVGEALAKAAKAKGIEQVVFDRNGFDYHGRVEAVAAAAREAGLKF.

Belongs to the universal ribosomal protein uL18 family. As to quaternary structure, part of the 50S ribosomal subunit; part of the 5S rRNA/L5/L18/L25 subcomplex. Contacts the 5S and 23S rRNAs.

This is one of the proteins that bind and probably mediate the attachment of the 5S RNA into the large ribosomal subunit, where it forms part of the central protuberance. This is Large ribosomal subunit protein uL18 from Anaeromyxobacter dehalogenans (strain 2CP-1 / ATCC BAA-258).